We begin with the raw amino-acid sequence, 82 residues long: RNA-binding protein GTNG_0100 (82 aa).

Belongs to the eukaryotic ribosomal protein eL8 family.

In Geobacillus thermodenitrificans (strain NG80-2), this protein is RNA-binding protein GTNG_0100.